Here is a 988-residue protein sequence, read N- to C-terminus: Transposase for transposon Tn21 (988 aa).

The segment at 672-696 (GDGTTSSSDEQNFRTASKAKSTGHI) is disordered. The segment covering 674 to 695 (GTTSSSDEQNFRTASKAKSTGH) has biased composition (polar residues).

Belongs to the transposase 7 family.

In terms of biological role, required for transposition of transposon Tn21. In Escherichia coli, this protein is Transposase for transposon Tn21 (tnpA).